A 500-amino-acid polypeptide reads, in one-letter code: uncharacterized protein (500 aa).

Residues 27–47 (IFALILIVFGFIIAPLLPGIF) traverse the membrane as a helical segment.

The protein localises to the membrane. This is an uncharacterized protein from Borreliella burgdorferi (strain ATCC 35210 / DSM 4680 / CIP 102532 / B31) (Borrelia burgdorferi).